The primary structure comprises 151 residues: Large ribosomal subunit protein bL9 (151 aa).

This sequence belongs to the bacterial ribosomal protein bL9 family.

Binds to the 23S rRNA. The polypeptide is Large ribosomal subunit protein bL9 (Nitrosococcus oceani (strain ATCC 19707 / BCRC 17464 / JCM 30415 / NCIMB 11848 / C-107)).